Here is a 782-residue protein sequence, read N- to C-terminus: Homeotic protein proboscipedia (782 aa).

Disordered regions lie at residues 1–23 (MQEVCSSLDTTSMGTQIKSESPL), 153–195 (PQTP…VPEN), 251–336 (MKHK…GISS), 358–380 (SSVSLDEDIEESSPIKVKKKDDG), 439–493 (IATP…QQQP), and 547–586 (YYNYNDTNGTPYLNHQQQHHHHAQHHQQQQHHQNHVADFE). The short motif at 164 to 169 (EYPWMK) is the Antp-type hexapeptide element. The segment at residues 198–257 (PRRLRTAYTNTQLLELEKEFHFNKYLCRPRRIEIAASLDLTERQVKVWFQNRRMKHKRQT) is a DNA-binding region (homeobox). Residues 308 to 321 (NNNTPSATNNNPSA) show a composition bias toward low complexity. Residues 322 to 336 (GNLTPNSSLETGISS) show a composition bias toward polar residues. Gly residues predominate over residues 452–463 (NGSGGGPAGGYF). The segment covering 464–493 (PGYYPSPKQQQQVQQQQLHPQQQQLPQQQP) has biased composition (low complexity). Positions 563–580 (QQHHHHAQHHQQQQHHQN) are enriched in basic residues.

It belongs to the Antp homeobox family. Proboscipedia subfamily.

The protein localises to the nucleus. Sequence-specific transcription factor which is part of a developmental regulatory system that provides cells with specific positional identities on the anterior-posterior axis. Controls development of mouthparts, and labial and maxillary palps. The polypeptide is Homeotic protein proboscipedia (pb) (Drosophila melanogaster (Fruit fly)).